The chain runs to 1338 residues: Serine/threonine-protein kinase cek1 (1338 aa).

A PAS domain is found at 28-98 (SKDENLQPSI…RAVNCLLKDD (71 aa)). The segment at 484-554 (PDFAIGSPMS…GRSSLFSRGR (71 aa)) is disordered. Polar residues predominate over residues 491–501 (PMSQDSSNYSS). A Phosphoserine modification is found at Ser-525. A compositionally biased stretch (polar residues) spans 541–550 (PASNGRSSLF). The Protein kinase domain maps to 589–958 (YKILKPISKG…VEEIKAHPFF (370 aa)). Residues 595–603 (ISKGAFGSV) and Lys-618 contribute to the ATP site. Asp-713 serves as the catalytic Proton acceptor. Ser-748 carries the phosphoserine modification. Residues 813-842 (ENSAEDSPTATNTPTSQVDESNIFRSTDSP) are compositionally biased toward polar residues. Disordered stretches follow at residues 813–844 (ENSAEDSPTATNTPTSQVDESNIFRSTDSPRV), 1010–1035 (KLEEERPASSIPQHVSGNRKGRLRSN), and 1159–1185 (SSTMSASQSQSSMHTALPDVTEGTSSD). The AGC-kinase C-terminal domain occupies 959-1057 (KSVNWDTILE…RNLDFLNKAN (99 aa)). The span at 1159-1174 (SSTMSASQSQSSMHTA) shows a compositional bias: low complexity. Position 1211 is a phosphoserine (Ser-1211).

Belongs to the protein kinase superfamily. Ser/Thr protein kinase family.

It carries out the reaction L-seryl-[protein] + ATP = O-phospho-L-seryl-[protein] + ADP + H(+). It catalyses the reaction L-threonyl-[protein] + ATP = O-phospho-L-threonyl-[protein] + ADP + H(+). May facilitate the progression of anaphase through direct or indirect interaction with the cut8 protein. This Schizosaccharomyces pombe (strain 972 / ATCC 24843) (Fission yeast) protein is Serine/threonine-protein kinase cek1 (cek1).